The chain runs to 461 residues: ATP synthase subunit beta (461 aa).

Gly-151–Thr-158 is an ATP binding site.

This sequence belongs to the ATPase alpha/beta chains family. In terms of assembly, F-type ATPases have 2 components, CF(1) - the catalytic core - and CF(0) - the membrane proton channel. CF(1) has five subunits: alpha(3), beta(3), gamma(1), delta(1), epsilon(1). CF(0) has three main subunits: a(1), b(2) and c(9-12). The alpha and beta chains form an alternating ring which encloses part of the gamma chain. CF(1) is attached to CF(0) by a central stalk formed by the gamma and epsilon chains, while a peripheral stalk is formed by the delta and b chains.

The protein localises to the cell inner membrane. The catalysed reaction is ATP + H2O + 4 H(+)(in) = ADP + phosphate + 5 H(+)(out). Functionally, produces ATP from ADP in the presence of a proton gradient across the membrane. The catalytic sites are hosted primarily by the beta subunits. This chain is ATP synthase subunit beta, found in Coxiella burnetii (strain RSA 331 / Henzerling II).